A 622-amino-acid chain; its full sequence is Mitochondrial distribution and morphology protein 34 (622 aa).

The region spanning 1-195 (MAFNFNWSPL…LPAIIHRLSL (195 aa)) is the SMP-LTD domain. Disordered regions lie at residues 211–234 (QVTN…DPVD), 303–322 (PSGL…SHVA), 355–432 (SMGA…IRQP), 445–464 (ERNA…PASR), 482–546 (SLQQ…QTHL), and 581–622 (KMGG…AYRH). Over residues 214–225 (NPPLEGPGLDPL) the composition is skewed to low complexity. Residues 360 to 372 (RHSKAHARKRKKR) are compositionally biased toward basic residues. The segment covering 373-384 (VVDLRRRPKNTD) has biased composition (basic and acidic residues). Residues 388-404 (SVSGESEFTESTSAASV) are compositionally biased toward low complexity. Composition is skewed to polar residues over residues 482-495 (SLQQ…SKSL) and 522-532 (NASNYTSSGDS). Composition is skewed to low complexity over residues 533-543 (QQQQQQQQQHQ) and 592-601 (NNKNDNKNNN).

The protein belongs to the MDM34 family. As to quaternary structure, component of the ER-mitochondria encounter structure (ERMES) or MDM complex, composed of MMM1, MDM10, MDM12 and MDM34.

The protein resides in the mitochondrion outer membrane. In terms of biological role, component of the ERMES/MDM complex, which serves as a molecular tether to connect the endoplasmic reticulum (ER) and mitochondria. Components of this complex are involved in the control of mitochondrial shape and protein biogenesis, and function in nonvesicular lipid trafficking between the ER and mitochondria. MDM34 is required for the interaction of the ER-resident membrane protein MMM1 and the outer mitochondrial membrane-resident beta-barrel protein MDM10. The chain is Mitochondrial distribution and morphology protein 34 from Ajellomyces capsulatus (strain G186AR / H82 / ATCC MYA-2454 / RMSCC 2432) (Darling's disease fungus).